A 343-amino-acid polypeptide reads, in one-letter code: Protein FAM50A-B (343 aa).

Disordered regions lie at residues 1 to 25 and 125 to 181; these read MAQYKGAASEAGRAMQLMKKREKQR and EEDE…EEEN. Residues 125–142 are compositionally biased toward acidic residues; it reads EEDEECEDEESEEEEEEY. Basic and acidic residues predominate over residues 172-181; that stretch reads PDRDREEEEN.

Belongs to the FAM50 family.

It localises to the nucleus. Functionally, probably involved in the regulation of pre-mRNA splicing. This is Protein FAM50A-B (fam50a-b) from Xenopus laevis (African clawed frog).